Here is a 574-residue protein sequence, read N- to C-terminus: Aspartate--tRNA ligase (574 aa).

Position 169 (Glu-169) interacts with L-aspartate. Residues 193-196 (QLFK) are aspartate. An L-aspartate-binding site is contributed by Arg-215. ATP-binding positions include 215-217 (RDE) and Gln-224. L-aspartate is bound at residue His-437. Glu-471 provides a ligand contact to ATP. Position 478 (Arg-478) interacts with L-aspartate. 523 to 526 (GLDR) is a binding site for ATP.

It belongs to the class-II aminoacyl-tRNA synthetase family. Type 1 subfamily. In terms of assembly, homodimer.

Its subcellular location is the cytoplasm. The catalysed reaction is tRNA(Asp) + L-aspartate + ATP = L-aspartyl-tRNA(Asp) + AMP + diphosphate. In terms of biological role, catalyzes the attachment of L-aspartate to tRNA(Asp) in a two-step reaction: L-aspartate is first activated by ATP to form Asp-AMP and then transferred to the acceptor end of tRNA(Asp). The protein is Aspartate--tRNA ligase of Mycoplasma mycoides subsp. mycoides SC (strain CCUG 32753 / NCTC 10114 / PG1).